A 189-amino-acid polypeptide reads, in one-letter code: Movement protein (189 aa).

The protein belongs to the tombusvirus/aureusvirus movement protein p22 family.

The protein resides in the host membrane. Its function is as follows. Transports viral genome to neighboring plant cells directly through plasmosdesmata, without any budding. The movement protein allows efficient cell to cell propagation, by bypassing the host cell wall barrier. The sequence is that of Movement protein from Cymbidium ringspot virus (CymRSV).